An 82-amino-acid chain; its full sequence is Cytochrome c oxidase-assembly factor cox-23, mitochondrial (82 aa).

The interval M1–E27 is disordered. A compositionally biased stretch (basic and acidic residues) spans E7–E27. In terms of domain architecture, CHCH spans L29–R71. Short sequence motifs (cx9C motif) lie at residues C32–C42 and C53–C63. Intrachain disulfides connect C32-C63 and C42-C53.

This sequence belongs to the COX23 family.

The protein localises to the mitochondrion intermembrane space. In terms of biological role, required for the assembly of cytochrome c oxidase. This Neurospora crassa (strain ATCC 24698 / 74-OR23-1A / CBS 708.71 / DSM 1257 / FGSC 987) protein is Cytochrome c oxidase-assembly factor cox-23, mitochondrial (cox-23).